The sequence spans 365 residues: RISC-loading complex subunit TARBP2 (365 aa).

Sufficient for interaction with PRKRA regions lie at residues 22-105 (MLAA…EPAL), 151-233 (SPQQ…DARD), and 286-365 (LGAL…AGSK). Residues 30–97 (TPISLLQEYG…AEVALKHLKG (68 aa)) form the DRBM 1 domain. A Phosphoserine modification is found at Ser-151. 2 DRBM domains span residues 158–226 (NPVG…RVHT) and 292–360 (ACCS…YLRI). The tract at residues 227 to 365 (VPLDARDGNE…QYLRIMAGSK (139 aa)) is sufficient for interaction with DICER1.

The protein belongs to the TARBP2 family. As to quaternary structure, self-associates. Component of the RISC loading complex (RLC), or micro-RNA (miRNA) loading complex (miRLC), which is composed of DICER1, AGO2 and TARBP2. Note that the trimeric RLC/miRLC is also referred to as RISC. Interacts with EIF2AK2/PKR and inhibits its protein kinase activity. Interacts with DHX9. Interacts with DICER1 and PRKRA. Interacts with DICER1, AGO2, MOV10, EIF6 and RPL7A (60S ribosome subunit); they form a large RNA-induced silencing complex (RISC). Interacts with IRF7; this interaction prevents IRF7 phosphorylation and activation.

It is found in the cytoplasm. Its subcellular location is the perinuclear region. The protein resides in the nucleus. Required for formation of the RNA induced silencing complex (RISC). Component of the RISC loading complex (RLC), also known as the micro-RNA (miRNA) loading complex (miRLC), which is composed of DICER1, AGO2 and TARBP2. Within the RLC/miRLC, DICER1 and TARBP2 are required to process precursor miRNAs (pre-miRNAs) to mature miRNAs and then load them onto AGO2. AGO2 bound to the mature miRNA constitutes the minimal RISC and may subsequently dissociate from DICER1 and TARBP2. May also play a role in the production of short interfering RNAs (siRNAs) from double-stranded RNA (dsRNA) by DICER1. Binds in vitro to the PRM1 3'-UTR. Seems to act as a repressor of translation. For some pre-miRNA substrates, may also alter the choice of cleavage site by DICER1. Negatively regulates IRF7-mediated IFN-beta signaling triggered by viral infection by inhibiting the phosphorylation of IRF7 and promoting its 'Lys'-48-linked ubiquitination and degradation. This is RISC-loading complex subunit TARBP2 (Tarbp2) from Mus musculus (Mouse).